The following is a 429-amino-acid chain: Enolase (429 aa).

Q167 contributes to the (2R)-2-phosphoglycerate binding site. The active-site Proton donor is E209. Residues D246, E289, and D316 each contribute to the Mg(2+) site. Positions 341, 370, 371, and 392 each coordinate (2R)-2-phosphoglycerate. Residue K341 is the Proton acceptor of the active site.

The protein belongs to the enolase family. In terms of assembly, component of the RNA degradosome, a multiprotein complex involved in RNA processing and mRNA degradation. The cofactor is Mg(2+).

Its subcellular location is the cytoplasm. The protein localises to the secreted. The protein resides in the cell surface. The catalysed reaction is (2R)-2-phosphoglycerate = phosphoenolpyruvate + H2O. It functions in the pathway carbohydrate degradation; glycolysis; pyruvate from D-glyceraldehyde 3-phosphate: step 4/5. Its function is as follows. Catalyzes the reversible conversion of 2-phosphoglycerate (2-PG) into phosphoenolpyruvate (PEP). It is essential for the degradation of carbohydrates via glycolysis. The polypeptide is Enolase (Pseudomonas putida (strain ATCC 47054 / DSM 6125 / CFBP 8728 / NCIMB 11950 / KT2440)).